The following is a 324-amino-acid chain: Large ribosomal subunit protein uL3m (324 aa).

Residues 1 to 41 constitute a mitochondrion transit peptide; the sequence is MAAVPRGLLSRINQFLSIRSITPSSSESLPHCSSFFLIRRF. The interval 206–229 is disordered; the sequence is PASHGASLSHRSGGSTGQRDAPGK.

Belongs to the universal ribosomal protein uL3 family. In terms of assembly, part of the 50S ribosomal subunit.

The protein resides in the mitochondrion. One of the primary rRNA binding proteins, it binds directly near the 3'-end of the 23S rRNA, where it nucleates assembly of the 50S subunit. This Arabidopsis thaliana (Mouse-ear cress) protein is Large ribosomal subunit protein uL3m.